Here is a 117-residue protein sequence, read N- to C-terminus: Iron-sulfur cluster insertion protein ErpA (117 aa).

Cysteine 45, cysteine 109, and cysteine 111 together coordinate iron-sulfur cluster.

Belongs to the HesB/IscA family. Homodimer. It depends on iron-sulfur cluster as a cofactor.

Functionally, required for insertion of 4Fe-4S clusters for at least IspG. This Ruthia magnifica subsp. Calyptogena magnifica protein is Iron-sulfur cluster insertion protein ErpA.